The chain runs to 282 residues: Proteasome subunit beta (282 aa).

A propeptide spans 1–54 (MGSHRDLPAGMVNHIFTNSGISSFTEFVGSYAPDLLPGRNETLAAPVGDRIPHA) (removed in mature form; by autocatalysis). Catalysis depends on threonine 55, which acts as the Nucleophile.

It belongs to the peptidase T1B family. In terms of assembly, the 20S proteasome core is composed of 14 alpha and 14 beta subunits that assemble into four stacked heptameric rings, resulting in a barrel-shaped structure. The two inner rings, each composed of seven catalytic beta subunits, are sandwiched by two outer rings, each composed of seven alpha subunits. The catalytic chamber with the active sites is on the inside of the barrel. Has a gated structure, the ends of the cylinder being occluded by the N-termini of the alpha-subunits. Is capped by the proteasome-associated ATPase, ARC.

The protein localises to the cytoplasm. The enzyme catalyses Cleavage of peptide bonds with very broad specificity.. It participates in protein degradation; proteasomal Pup-dependent pathway. With respect to regulation, the formation of the proteasomal ATPase ARC-20S proteasome complex, likely via the docking of the C-termini of ARC into the intersubunit pockets in the alpha-rings, may trigger opening of the gate for substrate entry. Interconversion between the open-gate and close-gate conformations leads to a dynamic regulation of the 20S proteasome proteolysis activity. Its function is as follows. Component of the proteasome core, a large protease complex with broad specificity involved in protein degradation. This is Proteasome subunit beta from Streptosporangium roseum (strain ATCC 12428 / DSM 43021 / JCM 3005 / KCTC 9067 / NCIMB 10171 / NRRL 2505 / NI 9100).